Consider the following 128-residue polypeptide: Lysozyme C-1 (128 aa).

A C-type lysozyme domain is found at 1–128 (KVYDRCEFAR…VSQYIRGCKL (128 aa)). Intrachain disulfides connect Cys-6–Cys-126, Cys-30–Cys-114, Cys-63–Cys-79, and Cys-75–Cys-93. Residues Glu-35 and Asp-51 contribute to the active site.

The protein belongs to the glycosyl hydrolase 22 family. As to quaternary structure, monomer.

It localises to the secreted. It carries out the reaction Hydrolysis of (1-&gt;4)-beta-linkages between N-acetylmuramic acid and N-acetyl-D-glucosamine residues in a peptidoglycan and between N-acetyl-D-glucosamine residues in chitodextrins.. Functionally, lysozymes have primarily a bacteriolytic function; those in tissues and body fluids are associated with the monocyte-macrophage system and enhance the activity of immunoagents. The chain is Lysozyme C-1 from Sus scrofa (Pig).